We begin with the raw amino-acid sequence, 1220 residues long: Post-transcriptional regulator MKT1L (1220 aa).

Residues 1-107 (MRKAGANRNN…SPWNSPPQQT (107 aa)) form a disordered region. The span at 34–70 (PHHHQHQHHHQHQHQHQHQHQHPHQHPHQHHHHHPHH) shows a compositional bias: basic residues.

This sequence belongs to the XPG/RAD2 endonuclease family. As to quaternary structure, forms a complex composed of at least MKT1L, PBP1, XAC1 and LSM12.

The protein resides in the cytoplasm. Its function is as follows. Involved in post-transcriptional regulation of gene expression. The sequence is that of Post-transcriptional regulator MKT1L from Trypanosoma brucei brucei (strain 927/4 GUTat10.1).